The chain runs to 400 residues: Argininosuccinate synthase (400 aa).

ATP is bound by residues 10–18 (AYSGGVDTS) and Ala38. An L-citrulline-binding site is contributed by Tyr89. Gly119 contacts ATP. Residues Thr121, Asn125, and Asp126 each contribute to the L-aspartate site. L-citrulline is bound at residue Asn125. Arg129, Ser177, Ser186, Glu262, and Tyr274 together coordinate L-citrulline.

This sequence belongs to the argininosuccinate synthase family. Type 1 subfamily. As to quaternary structure, homotetramer.

The protein resides in the cytoplasm. It catalyses the reaction L-citrulline + L-aspartate + ATP = 2-(N(omega)-L-arginino)succinate + AMP + diphosphate + H(+). It functions in the pathway amino-acid biosynthesis; L-arginine biosynthesis; L-arginine from L-ornithine and carbamoyl phosphate: step 2/3. The protein is Argininosuccinate synthase of Nostoc sp. (strain PCC 7120 / SAG 25.82 / UTEX 2576).